The primary structure comprises 167 residues: SAR-endolysin (167 aa).

A helical; Signal-anchor for type II membrane protein transmembrane segment spans residues 11–31 (VIAAISGGAIAIASVLITGPG). Active-site proton donor/acceptor residues include Glu-37 and Asp-46.

The protein belongs to the glycosyl hydrolase 24 family.

It localises to the host cell inner membrane. The enzyme catalyses Hydrolysis of (1-&gt;4)-beta-linkages between N-acetylmuramic acid and N-acetyl-D-glucosamine residues in a peptidoglycan and between N-acetyl-D-glucosamine residues in chitodextrins.. In terms of biological role, signal-arrest-release (SAR) endolysin with lysozyme activity that degrades host peptidoglycans and participates with the pinholin and spanin proteins in the sequential events which lead to programmed host cell lysis releasing the mature viral particles. Once the pinholin has permeabilized the host cell membrane, the SAR-endolysin is released into the periplasm where it breaks down the peptidoglycan layer. The polypeptide is SAR-endolysin (19) (Bacteriophage PS34).